The primary structure comprises 355 residues: Glucose-1-phosphate thymidylyltransferase (355 aa).

Aspartate 107 and aspartate 220 together coordinate Mg(2+).

This sequence belongs to the glucose-1-phosphate thymidylyltransferase family. Mg(2+) serves as cofactor.

The catalysed reaction is dTTP + alpha-D-glucose 1-phosphate + H(+) = dTDP-alpha-D-glucose + diphosphate. Its pathway is antibiotic biosynthesis; streptomycin biosynthesis. Its function is as follows. Involved in the biosynthesis of the streptose moiety of streptomycin. Catalyzes the formation of dTDP-glucose, from dTTP and glucose 1-phosphate, as well as its pyrophosphorolysis. The chain is Glucose-1-phosphate thymidylyltransferase (strD) from Streptomyces griseus.